We begin with the raw amino-acid sequence, 81 residues long: N.vectensis toxin 4 (81 aa).

An N-terminal signal peptide occupies residues 1–20 (MRSSWMFVICFAMLILYTNG). Cystine bridges form between Cys-46-Cys-75, Cys-48-Cys-70, and Cys-63-Cys-76.

Expressed in ectodermal gland cells. In adult female tissues, highly transcribed in mesenteries (gametes-producing tissue) and slightly transcribed in tentacles, pharynx and physa.

Functionally, has toxic effects on zebrafish larvae. It causes contractile paralysis and twitching of the tail within 30 minutes, followed by death within 40 minutes. Does not show any toxicity when injected into arthropods (cherry shrimps or grass shrimps). The protein is N.vectensis toxin 4 of Nematostella vectensis (Starlet sea anemone).